Here is a 518-residue protein sequence, read N- to C-terminus: Glutamate--cysteine ligase (518 aa).

It belongs to the glutamate--cysteine ligase type 1 family. Type 1 subfamily.

It carries out the reaction L-cysteine + L-glutamate + ATP = gamma-L-glutamyl-L-cysteine + ADP + phosphate + H(+). It participates in sulfur metabolism; glutathione biosynthesis; glutathione from L-cysteine and L-glutamate: step 1/2. The polypeptide is Glutamate--cysteine ligase (Salmonella typhi).